We begin with the raw amino-acid sequence, 413 residues long: Extracellular sucrase (413 aa).

The Nucleophile role is filled by D44. E276 (proton donor/acceptor) is an active-site residue.

Belongs to the glycosyl hydrolase 68 family.

Its subcellular location is the secreted. It carries out the reaction Hydrolysis of terminal non-reducing beta-D-fructofuranoside residues in beta-D-fructofuranosides.. The polypeptide is Extracellular sucrase (sacC) (Zymomonas mobilis subsp. mobilis (strain ATCC 10988 / DSM 424 / LMG 404 / NCIMB 8938 / NRRL B-806 / ZM1)).